A 129-amino-acid polypeptide reads, in one-letter code: NADH-quinone oxidoreductase subunit A (129 aa).

3 consecutive transmembrane segments (helical) span residues 9-29 (FPIGVVLLVAVVLAFTMLGLA), 68-88 (LLFIVFDIEAIFLYPWAVLLL), and 97-117 (LGWPGFVSMGIFVFTLVAGLV).

Belongs to the complex I subunit 3 family. NDH-1 is composed of 14 different subunits. Subunits NuoA, H, J, K, L, M, N constitute the membrane sector of the complex.

The protein resides in the cell inner membrane. It carries out the reaction a quinone + NADH + 5 H(+)(in) = a quinol + NAD(+) + 4 H(+)(out). Functionally, NDH-1 shuttles electrons from NADH, via FMN and iron-sulfur (Fe-S) centers, to quinones in the respiratory chain. The immediate electron acceptor for the enzyme in this species is believed to be ubiquinone. Couples the redox reaction to proton translocation (for every two electrons transferred, four hydrogen ions are translocated across the cytoplasmic membrane), and thus conserves the redox energy in a proton gradient. The chain is NADH-quinone oxidoreductase subunit A from Anaeromyxobacter sp. (strain K).